The following is an 801-amino-acid chain: uncharacterized protein (801 aa).

In terms of domain architecture, PE spans 1–93; the sequence is MSWVMVSPEL…GGAYAAAEAA (93 aa).

It belongs to the mycobacterial PE family. PGRS subfamily.

This is an uncharacterized protein from Mycobacterium tuberculosis (strain ATCC 25618 / H37Rv).